A 553-amino-acid chain; its full sequence is Formate--tetrahydrofolate ligase (553 aa).

65–72 (TPAGEGKS) contributes to the ATP binding site.

This sequence belongs to the formate--tetrahydrofolate ligase family.

It carries out the reaction (6S)-5,6,7,8-tetrahydrofolate + formate + ATP = (6R)-10-formyltetrahydrofolate + ADP + phosphate. The protein operates within one-carbon metabolism; tetrahydrofolate interconversion. In Brachyspira hyodysenteriae (strain ATCC 49526 / WA1), this protein is Formate--tetrahydrofolate ligase.